The sequence spans 522 residues: Sugar transport protein 1 (522 aa).

Over 1–22 (MPAGGFVVGDGQKAYPGKLTPF) the chain is Cytoplasmic. Residues 23 to 43 (VLFTCVVAAMGGLIFGYDIGI) form a helical membrane-spanning segment. Residues 44-79 (SGGVTSMPSFLKRFFPSVYRKQQEDASTNQYCQYDS) are Extracellular-facing. The chain crosses the membrane as a helical span at residues 80–100 (PTLTMFTSSLYLAALISSLVA). Residues 101–117 (STVTRKFGRRLSMLFGG) lie on the Cytoplasmic side of the membrane. Residues 118–138 (ILFCAGALINGFAKHVWMLIV) traverse the membrane as a helical segment. Topologically, residues 139–140 (GR) are extracellular. The helical transmembrane segment at 141–161 (ILLGFGIGFANQAVPLYLSEM) threads the bilayer. The Cytoplasmic segment spans residues 162-171 (APYKYRGALN). A helical transmembrane segment spans residues 172 to 192 (IGFQLSITIGILVAEVLNYFF). At 193-202 (AKIKGGWGWR) the chain is on the extracellular side. The helical transmembrane segment at 203–223 (LSLGGAVVPALIITIGSLVLP) threads the bilayer. The Cytoplasmic portion of the chain corresponds to 224–289 (DTPNSMIERG…YRPHLTMAVM (66 aa)). Ser-252 is subject to Phosphoserine. A helical membrane pass occupies residues 290–310 (IPFFQQLTGINVIMFYAPVLF). Over 311–321 (NTIGFTTDASL) the chain is Extracellular. Residues 322–342 (MSAVVTGSVNVAATLVSIYGV) form a helical membrane-spanning segment. Residues 343–348 (DRWGRR) are Cytoplasmic-facing. Residues 349-369 (FLFLEGGTQMLICQAVVAACI) form a helical membrane-spanning segment. The Extracellular portion of the chain corresponds to 370–384 (GAKFGVDGTPGELPK). The chain crosses the membrane as a helical span at residues 385–405 (WYAIVVVTFICIYVAGFAWSW). Over 406 to 427 (GPLGWLVPSEIFPLEIRSAAQS) the chain is Cytoplasmic. A helical transmembrane segment spans residues 428 to 448 (ITVSVNMIFTFIIAQIFLTML). Residues 449–452 (CHLK) are Extracellular-facing. A helical transmembrane segment spans residues 453–473 (FGLFLVFAFFVVVMSIFVYIF). Residues 474-522 (LPETKGIPIEEMGQVWRSHWYWSRFVEDGEYGNALEMGKNSNQAGTKHV) are Cytoplasmic-facing.

This sequence belongs to the major facilitator superfamily. Sugar transporter (TC 2.A.1.1) family. In terms of tissue distribution, mostly expressed in young leaves, especially in guard cells (at protein level). Also present in roots.

It localises to the cell membrane. Its function is as follows. Major hexose transporter. Mediates an active uptake of hexoses, by sugar/hydrogen symport. Can transport glucose, 3-O-methylglucose, fructose, xylose, mannose, galactose, fucose, 2-deoxyglucose and arabinose. Confers sensitivity to galactose in seedlings. The protein is Sugar transport protein 1 (STP1) of Arabidopsis thaliana (Mouse-ear cress).